A 393-amino-acid polypeptide reads, in one-letter code: Formate-dependent phosphoribosylglycinamide formyltransferase (393 aa).

Residues 22 to 23 and glutamate 82 contribute to the N(1)-(5-phospho-beta-D-ribosyl)glycinamide site; that span reads EL. ATP is bound by residues arginine 114, lysine 155, 160-165, 195-198, and glutamate 203; these read SSGKGQ and EGFI. The region spanning 119–308 is the ATP-grasp domain; sequence RLAAEELDLP…QFALHARAIL (190 aa). Residues glutamate 267 and glutamate 279 each coordinate Mg(2+). Residues aspartate 286, lysine 356, and 363 to 364 contribute to the N(1)-(5-phospho-beta-D-ribosyl)glycinamide site; that span reads RR.

This sequence belongs to the PurK/PurT family. Homodimer.

It catalyses the reaction N(1)-(5-phospho-beta-D-ribosyl)glycinamide + formate + ATP = N(2)-formyl-N(1)-(5-phospho-beta-D-ribosyl)glycinamide + ADP + phosphate + H(+). It functions in the pathway purine metabolism; IMP biosynthesis via de novo pathway; N(2)-formyl-N(1)-(5-phospho-D-ribosyl)glycinamide from N(1)-(5-phospho-D-ribosyl)glycinamide (formate route): step 1/1. Its function is as follows. Involved in the de novo purine biosynthesis. Catalyzes the transfer of formate to 5-phospho-ribosyl-glycinamide (GAR), producing 5-phospho-ribosyl-N-formylglycinamide (FGAR). Formate is provided by PurU via hydrolysis of 10-formyl-tetrahydrofolate. This chain is Formate-dependent phosphoribosylglycinamide formyltransferase, found in Pseudomonas putida (strain W619).